Reading from the N-terminus, the 101-residue chain is Small ribosomal subunit protein bS18c (101 aa).

The protein belongs to the bacterial ribosomal protein bS18 family. Part of the 30S ribosomal subunit.

The protein resides in the plastid. It is found in the chloroplast. In Panax ginseng (Korean ginseng), this protein is Small ribosomal subunit protein bS18c.